The sequence spans 268 residues: Hydroxyethylthiazole kinase (268 aa).

Met-45 contacts substrate. The ATP site is built by Arg-121 and Thr-167. Gly-194 contributes to the substrate binding site.

It belongs to the Thz kinase family. Requires Mg(2+) as cofactor.

It carries out the reaction 5-(2-hydroxyethyl)-4-methylthiazole + ATP = 4-methyl-5-(2-phosphooxyethyl)-thiazole + ADP + H(+). The protein operates within cofactor biosynthesis; thiamine diphosphate biosynthesis; 4-methyl-5-(2-phosphoethyl)-thiazole from 5-(2-hydroxyethyl)-4-methylthiazole: step 1/1. In terms of biological role, catalyzes the phosphorylation of the hydroxyl group of 4-methyl-5-beta-hydroxyethylthiazole (THZ). The polypeptide is Hydroxyethylthiazole kinase (Bacillus thuringiensis subsp. konkukian (strain 97-27)).